We begin with the raw amino-acid sequence, 902 residues long: Serine/threonine-protein kinase cbk1 (902 aa).

Disordered regions lie at residues 1-22 (MSEDQGQQGQRLSTARGSTCLK), 97-154 (ETHS…REDA), and 207-288 (QRMM…MVSP). Residues 97 to 118 (ETHSHSSDAEGTSHQDVSDRRN) are compositionally biased toward basic and acidic residues. The span at 125 to 134 (RPSSHSQADS) shows a compositional bias: polar residues. 2 stretches are compositionally biased toward basic and acidic residues: residues 142-154 (QQKEQSRTMREDA) and 210-221 (MLDRGNPKRERS). Residues 222 to 239 (SGSSTPSSKSSPVDSVST) show a composition bias toward low complexity. Polar residues predominate over residues 240–259 (APTSVSPGSLAPSGSTNNDP). The segment covering 264 to 274 (KHIDSQADLPE) has biased composition (basic and acidic residues). A Protein kinase domain is found at 378 to 732 (FEPLKILGRG…SPKYKQNDAI (355 aa)). ATP-binding positions include 384 to 392 (LGRGSFGVV) and Lys-432. The active-site Proton acceptor is Asp-527. One can recognise an AGC-kinase C-terminal domain in the interval 771–831 (RGINWEQIHR…KWHPLGGKGG (61 aa)). Positions 797 to 806 (YFDDGEHPSD) are enriched in basic and acidic residues. The tract at residues 797-875 (YFDDGEHPSD…KKRLKEAKRA (79 aa)) is disordered. The segment covering 807–818 (REDDSSDSELDG) has biased composition (acidic residues). A compositionally biased stretch (basic and acidic residues) spans 833–843 (HKPDKPLKADV).

The protein belongs to the protein kinase superfamily. STE Ser/Thr protein kinase family. COT1 subfamily.

The enzyme catalyses L-seryl-[protein] + ATP = O-phospho-L-seryl-[protein] + ADP + H(+). The catalysed reaction is L-threonyl-[protein] + ATP = O-phospho-L-threonyl-[protein] + ADP + H(+). Functionally, protein kinase that seems to play a role in the regulation of cell morphogenesis and proliferation. The sequence is that of Serine/threonine-protein kinase cbk1 (cbk1) from Emericella nidulans (strain FGSC A4 / ATCC 38163 / CBS 112.46 / NRRL 194 / M139) (Aspergillus nidulans).